Reading from the N-terminus, the 114-residue chain is Nucleoid-associated protein NT01CX_0824 (114 aa).

This sequence belongs to the YbaB/EbfC family. Homodimer.

The protein localises to the cytoplasm. Its subcellular location is the nucleoid. Its function is as follows. Binds to DNA and alters its conformation. May be involved in regulation of gene expression, nucleoid organization and DNA protection. In Clostridium novyi (strain NT), this protein is Nucleoid-associated protein NT01CX_0824.